A 330-amino-acid chain; its full sequence is Putative pentatricopeptide repeat-containing protein At5g36300 (330 aa).

PPR repeat units lie at residues 10–44, 45–75, 83–113, 114–148, 149–179, 185–215, 231–265, 266–296, and 302–330; these read SLSMYNSWIRYFCRTGETNEAMSLLAEIHSLGSRP, DPLSYVSFIETLASLRRTLEADALFHEVVRF, VRLYNALVSRYLRKEVSWRVVNEMKKRKFRL, NSFVYGKIIRIYRDNGMWKKALGIVEEIREIGLPM, DVEIYNSVIDTFGKYGELDEELQVLEKLQRS, NIRTWNSLIRWHCHHGAVDMALELFTMIFED, SANLFCTLANAYAQQGLCKQTVKVLKMMENEGIEP, NLIMLNVLINAFGTAGKHMEALSIYHHIKET, and DVVTYSTLMKAFTRAKKYEMVCSFYLVTL.

It belongs to the PPR family. P subfamily.

The sequence is that of Putative pentatricopeptide repeat-containing protein At5g36300 from Arabidopsis thaliana (Mouse-ear cress).